We begin with the raw amino-acid sequence, 515 residues long: FAD-dependent oxidoreductase domain-containing protein 1 homolog (515 aa).

Residues 18–37 are disordered; it reads AGATSNGSGSSGGDKSGEDL. A helical transmembrane segment spans residues 100 to 116; that stretch reads VLIIGGGGVGSSIAYWL.

In terms of assembly, associates with mitochondrial complex I assembly intermediates during its biogenesis. FAD serves as cofactor.

The protein localises to the mitochondrion inner membrane. In terms of biological role, involved in the assembly of the mitochondrial membrane respiratory chain NADH dehydrogenase (Complex I). This chain is FAD-dependent oxidoreductase domain-containing protein 1 homolog, found in Drosophila melanogaster (Fruit fly).